The following is a 340-amino-acid chain: Lipopolysaccharide heptosyltransferase 3 (340 aa).

Belongs to the glycosyltransferase 9 family.

It carries out the reaction an L-alpha-D-Hep-(1-&gt;3)-4-O-phospho-L-alpha-D-Hep-(1-&gt;5)-[alpha-Kdo-(2-&gt;4)]-alpha-Kdo-(2-&gt;6)-lipid A + ADP-L-glycero-beta-D-manno-heptose = an L-alpha-D-Hep-(1-&gt;7)-L-alpha-D-Hep-(1-&gt;3)-4-O-phospho-L-alpha-D-Hep-(1-&gt;5)-[alpha-Kdo-(2-&gt;4)]-alpha-Kdo-(2-&gt;6)-lipid A + ADP + H(+). The enzyme catalyses L-alpha-D-Hep-(1-&gt;3)-4-O-phospho-L-alpha-D-Hep-(1-&gt;5)-[alpha-Kdo-(2-&gt;4)]-alpha-Kdo-(2-&gt;6)-lipid A (E. coli) + ADP-L-glycero-beta-D-manno-heptose = L-alpha-D-Hep-(1-&gt;7)-L-alpha-D-Hep-(1-&gt;3)-4-O-phospho-L-alpha-D-Hep-(1-&gt;5)-[alpha-Kdo-(2-&gt;4)]-alpha-Kdo-(2-&gt;6)-lipid A (E. coli) + ADP + H(+). The protein operates within bacterial outer membrane biogenesis; LPS core biosynthesis. Glycosyltransferase involved in the biosynthesis of the core oligosaccharide region of lipopolysaccharide (LPS). Catalyzes the addition of the third heptose unit (HepIII) to the second heptose unit (HepII) of the phospho-Hep2-Kdo2-lipid A module. The transfer of HepIII seems to be a prerequisite to the phosphorylation of the second heptose unit. In Escherichia coli, this protein is Lipopolysaccharide heptosyltransferase 3.